The primary structure comprises 74 residues: Auswaprin-a (74 aa).

The signal sequence occupies residues Met-1 to Ser-24. Residues Arg-27–Ile-71 enclose the WAP domain. 4 cysteine pairs are disulfide-bonded: Cys-34–Cys-59, Cys-42–Cys-63, Cys-46–Cys-58, and Cys-52–Cys-67.

Belongs to the venom waprin family. Expressed by the venom gland.

It localises to the secreted. Damages membranes of susceptible bacteria. Has no hemolytic activity. Not toxic to mice. Does not inhibit the proteinases elastase and cathepsin G. This chain is Auswaprin-a, found in Pseudechis australis (Mulga snake).